The primary structure comprises 186 residues: Small ribosomal subunit protein uS5 (186 aa).

Residues 18 to 81 enclose the S5 DRBM domain; that stretch reads FVDKLVHINR…EAAKRAMIRV (64 aa).

The protein belongs to the universal ribosomal protein uS5 family. In terms of assembly, part of the 30S ribosomal subunit. Contacts proteins S4 and S8.

With S4 and S12 plays an important role in translational accuracy. In terms of biological role, located at the back of the 30S subunit body where it stabilizes the conformation of the head with respect to the body. This is Small ribosomal subunit protein uS5 from Parvibaculum lavamentivorans (strain DS-1 / DSM 13023 / NCIMB 13966).